The following is a 156-amino-acid chain: Phosphopantetheine adenylyltransferase (156 aa).

Residue Thr-10 coordinates substrate. ATP-binding positions include 10–11 (TF) and His-18. Residues Lys-42, Leu-74, and Arg-88 each contribute to the substrate site. Residues 89-91 (GLR), Glu-99, and 124-130 (NAFISSS) contribute to the ATP site.

Belongs to the bacterial CoaD family. Homohexamer. The cofactor is Mg(2+).

It localises to the cytoplasm. The enzyme catalyses (R)-4'-phosphopantetheine + ATP + H(+) = 3'-dephospho-CoA + diphosphate. The protein operates within cofactor biosynthesis; coenzyme A biosynthesis; CoA from (R)-pantothenate: step 4/5. In terms of biological role, reversibly transfers an adenylyl group from ATP to 4'-phosphopantetheine, yielding dephospho-CoA (dPCoA) and pyrophosphate. This is Phosphopantetheine adenylyltransferase from Campylobacter curvus (strain 525.92).